The sequence spans 1606 residues: E3 ubiquitin-protein ligase HECW1 (1606 aa).

The C2 domain maps to 182–318 (SAAPIFKSIG…LERHAIGDRV (137 aa)). Disordered regions lie at residues 349–418 (DDEE…PAEE), 459–538 (AEQL…CSLP), 566–672 (LLHS…SCEG), and 730–815 (STVF…SQLP). Positions 354 to 373 (SLSTEPESAQIQDSPMNNLM) are enriched in polar residues. A compositionally biased stretch (basic and acidic residues) spans 380–392 (PRSEAPESSESWK). 2 stretches are compositionally biased toward acidic residues: residues 500–511 (EEEEKEQEEEGD) and 579–588 (AEEEDGAEEE). Residues 589–600 (STLKDSSEKDGL) show a composition bias toward basic and acidic residues. Residues 612–621 (ALEEDREEPE) are compositionally biased toward acidic residues. Polar residues-rich tracts occupy residues 651–663 (HPST…SSPR), 751–765 (DSMQ…STNG), and 806–815 (HNSQPVSQLP). One can recognise a WW 1 domain in the interval 829 to 862 (EPLPPNWEARIDSHGRVFYVDHVNRTTTWQRPTA). Positions 870 to 901 (RRSGSIQQMEQLNRRYQNIQRTIATERSEEDS) form a coiled coil. Ser874, Ser937, and Ser939 each carry phosphoserine. The interval 894 to 938 (TERSEEDSGSQSCEQAPAGGGGGGGSDSEAESSQSSLDLRREGSL) is disordered. The WW 2 domain occupies 1018-1051 (LELPRGWEIKTDQQGKSFFVDHNSRATTFIDPRI). The HECT domain occupies 1271–1606 (SRKELQRNKL…VEETSTFGLE (336 aa)). The Glycyl thioester intermediate role is filled by Cys1574.

As to quaternary structure, interacts with DVL1 and SSR3. Also interacts with mutant SOD1. In terms of tissue distribution, predominantly expressed in neurons of adult and fetal brain. Weakly expressed in the kidney.

The protein resides in the cytoplasm. The enzyme catalyses S-ubiquitinyl-[E2 ubiquitin-conjugating enzyme]-L-cysteine + [acceptor protein]-L-lysine = [E2 ubiquitin-conjugating enzyme]-L-cysteine + N(6)-ubiquitinyl-[acceptor protein]-L-lysine.. It functions in the pathway protein modification; protein ubiquitination. In terms of biological role, E3 ubiquitin-protein ligase that mediates ubiquitination and subsequent degradation of DVL1. Also targets the mutant SOD1 protein involved in familial amyotrophic lateral sclerosis (FALS). Forms cytotoxic aggregates with DVL1, SSR3 and mutant SOD1 that lead to motor neuron death in FALS. This is E3 ubiquitin-protein ligase HECW1 (HECW1) from Homo sapiens (Human).